The following is a 54-amino-acid chain: Large ribosomal subunit protein eL37 (54 aa).

Residues cysteine 20, cysteine 23, cysteine 35, and cysteine 38 each contribute to the Zn(2+) site. The C4-type zinc-finger motif lies at 20 to 38; the sequence is CRRCGHHTYNVRTKRCSHC.

The protein belongs to the eukaryotic ribosomal protein eL37 family. Requires Zn(2+) as cofactor.

Functionally, binds to the 23S rRNA. This Thermoplasma acidophilum (strain ATCC 25905 / DSM 1728 / JCM 9062 / NBRC 15155 / AMRC-C165) protein is Large ribosomal subunit protein eL37 (rpl37e).